The chain runs to 303 residues: MISAKSVKELRERTGAGMMDCKKALTETDGDIEKAVEVLREKGLAAAAKKSGRVAAEGLVKTYISEDKKSGAIVELNCETDFVAANEDFIAFADALAKIATSTSATTVEELVNEKFDAEATIQEALTGLIARLGENMTVRRFVKFSVDNGVVKSYIHGGGRIGVLVEVACDVESPAVEEVAKELCMQIAAANPLFLSKEEVDQDSIEKEKEIYRVQALNEGKPEKIVEKMVMGRIQKYYKEVCLLEQLWVKDSDKTITKFIDEKAKEAGSAIKVNRFVRFERGEGIEKVEENFAEEVAKQLGK.

The interval 80–83 is involved in Mg(2+) ion dislocation from EF-Tu; that stretch reads TDFV.

This sequence belongs to the EF-Ts family.

It is found in the cytoplasm. Functionally, associates with the EF-Tu.GDP complex and induces the exchange of GDP to GTP. It remains bound to the aminoacyl-tRNA.EF-Tu.GTP complex up to the GTP hydrolysis stage on the ribosome. The chain is Elongation factor Ts from Clostridium botulinum (strain Alaska E43 / Type E3).